Reading from the N-terminus, the 234-residue chain is MKHTGGSLPMYMQIAEMLVREVAAGRLIDGEKLAPERDMAADLGIAVGTLRKSLAELQERGLLERVQGSGNYIRAVSDPQSVYAFFRLELIEGGGLPTAEVLDVARLAKPADLPAFGTSTEGHRIRRLRRIAGKPAAIEEIWLDGSYVDTITIENMSESLYLYYRTRLNLWISKAEDRIDLGDVPEWAPEVFGQKAGSSVPRVLRLSQAQDGAVAEVSWTWFDHTVARYVSRIR.

The HTH gntR-type domain occupies 8-76 (LPMYMQIAEM…QGSGNYIRAV (69 aa)). Residues 36–55 (ERDMAADLGIAVGTLRKSLA) constitute a DNA-binding region (H-T-H motif).

Its subcellular location is the cytoplasm. In terms of biological role, probably regulates expression of genes involved in the sulfoquinovose monooxygenase (sulfo-SMO) pathway (smoABCDEFGHI). This is HTH-type transcriptional regulator SmoD from Agrobacterium fabrum (strain C58 / ATCC 33970) (Agrobacterium tumefaciens (strain C58)).